Reading from the N-terminus, the 728-residue chain is Catalase-peroxidase 1 (728 aa).

Positions 1–22 (MDKTQSSQGKCPVMHGANSAVA) are cleaved as a signal peptide. The segment at residues 97-225 (WHSAGTYRVA…LAAVMMGLIY (129 aa)) is a cross-link (tryptophyl-tyrosyl-methioninium (Trp-Tyr) (with M-251)). The active-site Proton acceptor is the His98. A cross-link (tryptophyl-tyrosyl-methioninium (Tyr-Met) (with W-97)) is located at residues 225 to 251 (YVNPEGVDGKPDPLRTAQDVRVTFARM). Position 266 (His266) interacts with heme b.

Belongs to the peroxidase family. Peroxidase/catalase subfamily. Homodimer or homotetramer. It depends on heme b as a cofactor. Post-translationally, formation of the three residue Trp-Tyr-Met cross-link is important for the catalase, but not the peroxidase activity of the enzyme.

It carries out the reaction H2O2 + AH2 = A + 2 H2O. The catalysed reaction is 2 H2O2 = O2 + 2 H2O. Its function is as follows. Bifunctional enzyme with both catalase and broad-spectrum peroxidase activity. This is Catalase-peroxidase 1 from Shewanella sp. (strain MR-4).